The chain runs to 1665 residues: Protein scribble homolog (1665 aa).

Residues 1-804 (MLKCIPLWRC…MRVWRERMVE (804 aa)) form a sufficient for targeting to adherens junction and to inhibit cell proliferation region. A Phosphoserine modification is found at serine 37. 16 LRR repeats span residues 37 to 58 (SLEE…FFRL), 60 to 81 (NLRK…VANF), 83 to 104 (QLVE…IKFC), 106 to 127 (ALEI…FTQL), 129 to 150 (SLAH…VGNL), 152 to 174 (NLVT…SFLV), 175 to 197 (KLEQ…GALP), 198 to 219 (NLRE…LGNL), 221 to 243 (RLVC…GGLA), 244 to 265 (LLTD…IGQL), 267 to 288 (QLSI…IGDC), 290 to 312 (NLSE…GKLT), 313 to 334 (KLTN…IGGC), 336 to 357 (ALSV…LAHT), 359 to 381 (ELHV…THLN), and 382 to 402 (LKAL…QTED). Threonine 378 carries the phosphothreonine modification. 2 disordered regions span residues 422 to 615 (PSLE…HFKI) and 635 to 689 (REGP…SAPS). Residues 428-437 (GQQSSPSESC) show a composition bias toward polar residues. Positions 452-463 (DTLEGEEDAEEA) are enriched in acidic residues. Residues 455–475 (EGEEDAEEAAAEKRGLQRRAT) are a coiled coil. Threonine 475 is subject to Phosphothreonine. 2 stretches are compositionally biased toward basic and acidic residues: residues 479-494 (SELK…RRNE) and 570-580 (FAEDTLIPRED). Residue serine 583 is modified to Phosphoserine. The stretch at 653 to 687 (RAHEEEEEEEEENRDEEEGEATTEEDDKEEAVASA) forms a coiled coil. Residues 657 to 681 (EEEEEEEENRDEEEGEATTEEDDKE) are compositionally biased toward acidic residues. Phosphothreonine is present on residues threonine 674 and threonine 675. 2 positions are modified to phosphoserine: serine 694 and serine 750. The tract at residues 703–1215 (IEPARIEEEE…SLESISSIDR (513 aa)) is interaction with ARHGEF7. The PDZ 1 domain maps to 714–801 (TLTIVRQTGG…AVQMRVWRER (88 aa)). The required for interaction with VIM stretch occupies residues 714 to 1180 (TLTIVRQTGG…TVLVCDGFDT (467 aa)). Position 812 is a phosphothreonine (threonine 812). Phosphoserine occurs at positions 821, 861, and 925. PDZ domains are found at residues 848–936 (AACL…ERET), 990–1079 (EICL…RRDP), and 1086–1180 (ELCI…GFDT). Serine 1126, serine 1206, serine 1209, serine 1212, serine 1218, serine 1262, serine 1265, and serine 1284 each carry phosphoserine. Basic and acidic residues predominate over residues 1213–1228 (IDRELSPEGPGKEKEL). A disordered region spans residues 1213–1246 (IDRELSPEGPGKEKELASQALPWESESAETTGRN). Disordered stretches follow at residues 1263 to 1325 (AGSL…DELP) and 1341 to 1501 (VHPP…AERR). Over residues 1264-1277 (GSLQRGPSATTGGK) the composition is skewed to polar residues. An Omega-N-methylarginine modification is found at lysine 1291. Alanine 1299 carries the post-translational modification Phosphoserine. The residue at position 1312 (arginine 1312) is an Omega-N-methylarginine. Serine 1320 carries the post-translational modification Phosphoserine. The residue at position 1353 (threonine 1353) is a Phosphothreonine. Serine 1359 is modified (phosphoserine). Residues 1364 to 1376 (SFRERQKYFELEV) are compositionally biased toward basic and acidic residues. Serine 1389 bears the Phosphoserine mark. A coiled-coil region spans residues 1390-1421 (LVGADDLRKMQEEEARKLQQKRAQMLREEAVT). A compositionally biased stretch (basic and acidic residues) spans 1394-1406 (DDLRKMQEEEARK). Serine 1455 and serine 1458 each carry phosphoserine. Over residues 1471–1482 (AKAERRHQERLR) the composition is skewed to basic and acidic residues. Residues serine 1485, serine 1496, and serine 1518 each carry the phosphoserine modification. A disordered region spans residues 1530-1577 (LSKSQEGRGKRGPLERLAEAPSPAPTPSPTPLEDFGLQTSASPGRLPL). A compositionally biased stretch (basic and acidic residues) spans 1534–1547 (QEGRGKRGPLERLA). The residue at position 1551 (serine 1551) is a Phosphoserine. Residue threonine 1555 is modified to Phosphothreonine. Phosphoserine is present on residues serine 1557, serine 1571, and serine 1601. Residues 1632 to 1665 (GRPSPGAVGPEDMTLCSSRRSVRPGRRGLGPVPS) form a disordered region.

The protein belongs to the LAP (LRR and PDZ) protein family. Interacts with UBE3A. Interacts with PAK1 and PAK2. Interacts (via PDZ domains) with VANGL2. Interacts (via PDZ domains) with LPP and TRIP6; the interaction is direct. Interacts (via PDZ domains) with TJP2. Interacts (via PDZ domains) with APC; may mediate APC targeting to adherens junctions of epithelial cells. Interacts (via PDZ domains) with TSHR; regulates TSHR trafficking and function. Interacts with ARHGEF7 and GIT1; interacts directly with ARHGEF7. Interacts with CTNNB1. Interacts with MAPK12. Interacts (via PDZ domains 1 and 3) with MCC. Interacts with DLG5. Interacts with STK4/MST1 and LATS1 in the presence of DLG5. Interacts (via PDZ domain 3) with CRTAM (via PDZ-binding motif); the interaction promotes CRTAM and SCRIB polarization in a subset of CD4+ T-cells. Interacts with YES1, when YES1 is in a closed conformation; the interaction facilitates YES1 autophosphorylation. Interacts (via PDZ domains) with VIM; the interaction protects SCRIB from proteasomal degradation and facilitates SCRIB localization to intermediate filaments, the interaction is reduced by cell contact inhibition. Ubiquitinated; targeted for UBE3A-dependent multiubiquitination and degraded. In terms of processing, palmitoylated. Could be depalmitoylated by LYPLA1 and/or LYPLA2. Palmitoylation of SCRIB by ZDHHC7 is required for its localization to cell-cell junctions, function in the establishement of epithelial cell polarity and the regulation of downstream signaling pathways important for epithelial cell differentiation. Expressed in CD4+ T-cells (at protein level). Found in a wide range of tissues including liver, kidney and spleen. Also expressed in the brain (at protein level).

The protein localises to the cell membrane. It is found in the cell junction. The protein resides in the adherens junction. It localises to the cell projection. Its subcellular location is the lamellipodium. The protein localises to the cytoplasm. It is found in the postsynapse. The protein resides in the presynapse. Scaffold protein involved in different aspects of polarized cell differentiation regulating epithelial and neuronal morphogenesis and T-cell polarization. Via its interaction with CRTAM, required for the late phase polarization of a subset of CD4+ T-cells, which in turn regulates TCR-mediated proliferation and IFNG and IL22 production. Plays a role in cell directional movement, cell orientation, cell sheet organization and Golgi complex polarization at the cell migration front. Promotes epithelial cell layer barrier function via maintaining cell-cell adhesion. Most probably functions in the establishment of apico-basal cell polarity. May function in cell proliferation regulating progression from G1 to S phase and as a positive regulator of apoptosis for instance during acinar morphogenesis of the mammary epithelium. May regulate cell invasion via MAPK-mediated cell migration and adhesion. May play a role in exocytosis and in the targeting of synaptic vesicles to synapses. Functions as an activator of Rac GTPase activity. This Mus musculus (Mouse) protein is Protein scribble homolog.